A 696-amino-acid chain; its full sequence is Two-component response regulator ORR22 (696 aa).

The Response regulatory domain maps to 27–142; that stretch reads RVLAVDDDPV…ELRNIWQHVV (116 aa). Residue Asp78 is modified to 4-aspartylphosphate. The disordered stretch occupies residues 154-214; the sequence is LDFSKECNKP…DYQENDEPSA (61 aa). Over residues 176–185 the composition is skewed to polar residues; the sequence is TCGSSDQNGR. A compositionally biased stretch (acidic residues) spans 195–211; that stretch reads GEDDDEGDDNDYQENDE. Positions 214–273 form a DNA-binding region, myb-like GARP; that stretch reads AAKKPRVVWSVELHRKFVAAVNQLGIDKAVPKRILELMNVEKLTRENVASHLQKYRLYLK.

Belongs to the ARR family. Type-B subfamily. Post-translationally, two-component system major event consists of a His-to-Asp phosphorelay between a sensor histidine kinase (HK) and a response regulator (RR). In plants, the His-to-Asp phosphorelay involves an additional intermediate named Histidine-containing phosphotransfer protein (HPt). This multistep phosphorelay consists of a His-Asp-His-Asp sequential transfer of a phosphate group between first a His and an Asp of the HK protein, followed by the transfer to a conserved His of the HPt protein and finally the transfer to an Asp in the receiver domain of the RR protein.

The protein resides in the nucleus. Functionally, transcriptional activator that binds specific DNA sequence. Functions as a response regulator involved in His-to-Asp phosphorelay signal transduction system. Phosphorylation of the Asp residue in the receiver domain activates the ability of the protein to promote the transcription of target genes. May directly activate some type-A response regulators in response to cytokinins. Functions as a response regulator in response to cytokinins. This Oryza sativa subsp. japonica (Rice) protein is Two-component response regulator ORR22.